A 180-amino-acid polypeptide reads, in one-letter code: Ribulose bisphosphate carboxylase small subunit, chloroplastic 2 (180 aa).

The N-terminal 56 residues, 1-56, are a transit peptide targeting the chloroplast; the sequence is MASMISSSAVTTVSRASRGQSAAVAPFGGLKSMTGFPVKKVNTDITSITSNGGRVK.

It belongs to the RuBisCO small chain family. As to quaternary structure, heterohexadecamer of 8 large and 8 small subunits.

The protein localises to the plastid. It localises to the chloroplast. Its function is as follows. RuBisCO catalyzes two reactions: the carboxylation of D-ribulose 1,5-bisphosphate, the primary event in carbon dioxide fixation, as well as the oxidative fragmentation of the pentose substrate. Both reactions occur simultaneously and in competition at the same active site. Although the small subunit is not catalytic it is essential for maximal activity. The polypeptide is Ribulose bisphosphate carboxylase small subunit, chloroplastic 2 (Pisum sativum (Garden pea)).